The following is a 926-amino-acid chain: OTU domain-containing protein 7A (926 aa).

Phosphoserine is present on serine 121. Positions glutamate 170 to tryptophan 413 are TRAF-binding. Residues alanine 185–threonine 452 are catalytic. An OTU domain is found at leucine 201–methionine 377. The active site involves aspartate 209. Cysteine 212 (nucleophile) is an active-site residue. Histidine 370 functions as the Proton acceptor in the catalytic mechanism. Disordered regions lie at residues proline 455–alanine 517, glycine 540–tryptophan 615, and glutamate 671–serine 779. Residues valine 484–lysine 494 are compositionally biased toward low complexity. Residues asparagine 495–alanine 513 show a composition bias toward basic and acidic residues. The Nuclear localization signal signature appears at lysine 497–arginine 512. Composition is skewed to low complexity over residues glycine 579–threonine 595, alanine 680–threonine 691, and serine 731–proline 750. Residues glycine 751–threonine 767 are compositionally biased toward gly residues. At arginine 880 the chain carries Omega-N-methylarginine. The A20-type zinc-finger motif lies at glycine 884–arginine 919. 4 residues coordinate Zn(2+): cysteine 890, cysteine 895, cysteine 907, and cysteine 910.

It belongs to the peptidase C64 family.

The protein localises to the cytoplasm. The protein resides in the nucleus. The catalysed reaction is Thiol-dependent hydrolysis of ester, thioester, amide, peptide and isopeptide bonds formed by the C-terminal Gly of ubiquitin (a 76-residue protein attached to proteins as an intracellular targeting signal).. Deubiquitinase, which cleaves 'Lys-11'-linked polyubiquitin chains. The polypeptide is OTU domain-containing protein 7A (Otud7a) (Mus musculus (Mouse)).